The chain runs to 1098 residues: Platelet-derived growth factor receptor beta (1098 aa).

An N-terminal signal peptide occupies residues 1–31 (MGLPGVIPALVLRGQLLLSVLWLLGPQTSRG). At 32–531 (LVITPPGPEF…VVPHSLPFKV (500 aa)) the chain is on the extracellular side. 5 consecutive Ig-like C2-type domains span residues 33–119 (VITP…YIFV), 128–209 (PMDS…YSLQ), 213–308 (INVS…INIS), 330–402 (HRSR…HEDD), and 415–523 (PVRV…VTVV). N-linked (GlcNAc...) asparagine glycosylation is found at asparagine 44, asparagine 88, and asparagine 102. A disulfide bond links cysteine 53 and cysteine 99. Cysteine 148 and cysteine 189 are disulfide-bonded. N-linked (GlcNAc...) asparagine glycosylation is present at asparagine 214. Cysteine 234 and cysteine 290 form a disulfide bridge. Residues asparagine 291, asparagine 306, asparagine 353, asparagine 370, asparagine 444, asparagine 467, and asparagine 478 are each glycosylated (N-linked (GlcNAc...) asparagine). A disulfide bridge links cysteine 435 with cysteine 507. Residues 532-552 (VVISAILALVVLTVISLIILI) form a helical membrane-spanning segment. Over 553 to 1098 (MLWQKKPRYE…PLAEAEDSFL (546 aa)) the chain is Cytoplasmic. Residues tyrosine 561, tyrosine 578, and tyrosine 580 each carry the phosphotyrosine; by autocatalysis modification. The 363-residue stretch at 599–961 (LVLGRTLGSG…QLVLLLERLL (363 aa)) folds into the Protein kinase domain. ATP-binding positions include 605–613 (LGSGAFGQV) and lysine 633. Tyrosine 685 carries the post-translational modification Phosphotyrosine; by ABL1 and ABL2. 7 positions are modified to phosphotyrosine; by autocatalysis: tyrosine 715, tyrosine 739, tyrosine 750, tyrosine 762, tyrosine 770, tyrosine 774, and tyrosine 777. Residue aspartate 825 is the Proton acceptor of the active site. Tyrosine 856 carries the phosphotyrosine; by autocatalysis modification. Residues tyrosine 933 and tyrosine 969 each carry the phosphotyrosine; by ABL1 and ABL2 modification. A phosphotyrosine; by autocatalysis mark is found at tyrosine 1008 and tyrosine 1020. The disordered stretch occupies residues 1016–1098 (SDNDYIIPLP…PLAEAEDSFL (83 aa)). Positions 1042 to 1059 (SLASSTLNEVNTSSTISC) are enriched in polar residues. The span at 1062-1082 (PLELQEEPQQAEPEAQLEQPQ) shows a compositional bias: low complexity.

Belongs to the protein kinase superfamily. Tyr protein kinase family. CSF-1/PDGF receptor subfamily. Interacts with homodimeric PDGFB and PDGFD, and with heterodimers formed by PDGFA and PDGFB. May also interact with homodimeric PDGFC. Monomer in the absence of bound ligand. Interaction with homodimeric PDGFB, heterodimers formed by PDGFA and PDGFB or homodimeric PDGFD, leads to receptor dimerization, where both PDGFRA homodimers and heterodimers with PDGFRB are observed. Interacts with SH2B2/APS. Interacts directly (tyrosine phosphorylated) with SHB. Interacts (tyrosine phosphorylated) with PIK3R1 and RASA1. Interacts (tyrosine phosphorylated) with CBL. Interacts (tyrosine phosphorylated) with SRC and SRC family kinases. Interacts (tyrosine phosphorylated) with PIK3C2B, maybe indirectly. Interacts (tyrosine phosphorylated) with SHC1, GRB7, GRB10 and NCK1. Interaction with GRB2 is mediated by SHC1. Interacts (via C-terminus) with NHERF1. Post-translationally, autophosphorylated on tyrosine residues upon ligand binding. Autophosphorylation occurs in trans, i.e. one subunit of the dimeric receptor phosphorylates tyrosine residues on the other subunit. Phosphorylation at Tyr-578, and to a lesser degree, Tyr-580 is important for interaction with SRC. Phosphorylation at Tyr-715 is important for interaction with GRB2. Phosphorylation at Tyr-739 and Tyr-750 is important for interaction with PIK3R1. Phosphorylation at Tyr-750 is important for interaction with NCK1. Phosphorylation at Tyr-770 and Tyr-856 is important for interaction with RASA1/GAP. Phosphorylation at Tyr-856 is important for efficient phosphorylation of PLCG1 and PTPN11, resulting in increased phosphorylation of AKT1, MAPK1/ERK2 and/or MAPK3/ERK1, PDCD6IP/ALIX and STAM, and in increased cell proliferation. Phosphorylation at Tyr-1008 is important for interaction with PTPN11. Phosphorylation at Tyr-1008 and Tyr-1020 is important for interaction with PLCG1. Dephosphorylated by PTPRJ at Tyr-750, Tyr-856, Tyr-1008 and Tyr-1020. Dephosphorylated by PTPN2 at Tyr-578 and Tyr-1020. N-glycosylated. In terms of processing, ubiquitinated. After autophosphorylation, the receptor is polyubiquitinated, leading to its degradation. Weakly expressed in glomerular mesangial cells and interstitial cells. Up-regulated in areas of renal fibrosis. In mice with unilateral ureteral obstruction, increased expression in interstitial cells at day 4 and expression is markedly elevated at day 7 and is maximal at day 14.

Its subcellular location is the cell membrane. It is found in the cytoplasmic vesicle. It localises to the lysosome lumen. It catalyses the reaction L-tyrosyl-[protein] + ATP = O-phospho-L-tyrosyl-[protein] + ADP + H(+). Its activity is regulated as follows. Present in an inactive conformation in the absence of bound ligand. Binding of PDGFB and/or PDGFD leads to dimerization and activation by autophosphorylation on tyrosine residues. In terms of biological role, tyrosine-protein kinase that acts as a cell-surface receptor for homodimeric PDGFB and PDGFD and for heterodimers formed by PDGFA and PDGFB, and plays an essential role in the regulation of embryonic development, cell proliferation, survival, differentiation, chemotaxis and migration. Plays an essential role in blood vessel development by promoting proliferation, migration and recruitment of pericytes and smooth muscle cells to endothelial cells. Plays a role in the migration of vascular smooth muscle cells and the formation of neointima at vascular injury sites. Required for normal development of the cardiovascular system. Required for normal recruitment of pericytes (mesangial cells) in the kidney glomerulus, and for normal formation of a branched network of capillaries in kidney glomeruli. Promotes rearrangement of the actin cytoskeleton and the formation of membrane ruffles. Binding of its cognate ligands - homodimeric PDGFB, heterodimers formed by PDGFA and PDGFB or homodimeric PDGFD -leads to the activation of several signaling cascades; the response depends on the nature of the bound ligand and is modulated by the formation of heterodimers between PDGFRA and PDGFRB. Phosphorylates PLCG1, PIK3R1, PTPN11, RASA1/GAP, CBL, SHC1 and NCK1. Activation of PLCG1 leads to the production of the cellular signaling molecules diacylglycerol and inositol 1,4,5-trisphosphate, mobilization of cytosolic Ca(2+) and the activation of protein kinase C. Phosphorylation of PIK3R1, the regulatory subunit of phosphatidylinositol 3-kinase, leads to the activation of the AKT1 signaling pathway. Phosphorylation of SHC1, or of the C-terminus of PTPN11, creates a binding site for GRB2, resulting in the activation of HRAS, RAF1 and down-stream MAP kinases, including MAPK1/ERK2 and/or MAPK3/ERK1. Promotes phosphorylation and activation of SRC family kinases. Promotes phosphorylation of PDCD6IP/ALIX and STAM. Receptor signaling is down-regulated by protein phosphatases that dephosphorylate the receptor and its down-stream effectors, and by rapid internalization of the activated receptor. In Mus musculus (Mouse), this protein is Platelet-derived growth factor receptor beta (Pdgfrb).